The following is a 138-amino-acid chain: Probable glycine cleavage system H protein 1 (138 aa).

Residues 30-112 enclose the Lipoyl-binding domain; sequence IATVGITDYA…YGRGWIFKLK (83 aa). K71 is subject to N6-lipoyllysine.

It belongs to the GcvH family. As to quaternary structure, the glycine cleavage system is composed of four proteins: P, T, L and H. It depends on (R)-lipoate as a cofactor.

Functionally, the glycine cleavage system catalyzes the degradation of glycine. The H protein shuttles the methylamine group of glycine from the P protein to the T protein. This Sulfolobus acidocaldarius (strain ATCC 33909 / DSM 639 / JCM 8929 / NBRC 15157 / NCIMB 11770) protein is Probable glycine cleavage system H protein 1.